A 253-amino-acid chain; its full sequence is Lys-63-specific deubiquitinase BRCC36 (253 aa).

An MPN domain is found at 9-145 (VELQTDVYMV…KEHEIFLNCF (137 aa)). Residues H94, H96, and D107 each contribute to the Zn(2+) site. The short motif at 94–107 (HSHPHITVCPSHVD) is the JAMM motif element. The stretch at 227–249 (EKRIALNKLRATHLQRQLQELQK) forms a coiled coil.

The protein belongs to the peptidase M67A family. BRCC36 subfamily. As to quaternary structure, component of the BRISC complex, at least composed of ABRAXAS2, BRCC3/BRCC36, BABAM2 and BABAM1/NBA1. Within the complex, interacts directly with ABRAXAS2. The heterodimer with ABRAXAS2 assembles into a heterotetramer. The BRISC complex binds polyubiquitin. Requires Zn(2+) as cofactor.

It localises to the cytoplasm. Its subcellular location is the nucleus. The protein localises to the cytoskeleton. It is found in the spindle pole. In terms of biological role, metalloprotease that specifically cleaves 'Lys-63'-linked polyubiquitin chains, leaving the last ubiquitin chain attached to its substrates. Catalytic subunit of the BRISC complex; does not have activity by itself, but needs to be associated into a heterotetramer with ABRAXAS2 for minimal in vitro activity. Plays a role in regulating the onset of apoptosis via its role in modulating 'Lys-63'-linked ubiquitination of target proteins. Required for normal mitotic spindle assembly and microtubule attachment to kinetochores via its role in deubiquitinating spindle assembly factors. This Camponotus floridanus (Florida carpenter ant) protein is Lys-63-specific deubiquitinase BRCC36.